We begin with the raw amino-acid sequence, 369 residues long: Anhydro-N-acetylmuramic acid kinase (369 aa).

Residue 12 to 19 (GTSLDGVD) participates in ATP binding.

Belongs to the anhydro-N-acetylmuramic acid kinase family.

The enzyme catalyses 1,6-anhydro-N-acetyl-beta-muramate + ATP + H2O = N-acetyl-D-muramate 6-phosphate + ADP + H(+). The protein operates within amino-sugar metabolism; 1,6-anhydro-N-acetylmuramate degradation. It participates in cell wall biogenesis; peptidoglycan recycling. Catalyzes the specific phosphorylation of 1,6-anhydro-N-acetylmuramic acid (anhMurNAc) with the simultaneous cleavage of the 1,6-anhydro ring, generating MurNAc-6-P. Is required for the utilization of anhMurNAc either imported from the medium or derived from its own cell wall murein, and thus plays a role in cell wall recycling. The sequence is that of Anhydro-N-acetylmuramic acid kinase from Actinobacillus pleuropneumoniae serotype 7 (strain AP76).